A 318-amino-acid chain; its full sequence is Protein OPG137 (318 aa).

Residues 145-172 (VYDKDKRIQMLEDEVVNLRNQRSNTKSS) adopt a coiled-coil conformation.

The protein belongs to the orthopoxvirus OPG137 family. As to quaternary structure, homomultimer. Interacts with OPG160. In terms of processing, phosphorylated by a OPG054-independent mechanism.

The protein localises to the host cytoplasm. Functionally, required for viral crescent formation early during virus morphogenesis. In Vaccinia virus (strain Ankara) (VACV), this protein is Protein OPG137 (OPG137).